The primary structure comprises 357 residues: Sorbitol dehydrogenase 2 (357 aa).

A Zn(2+)-binding site is contributed by Cys43. Substrate is bound at residue Tyr49. The Zn(2+) site is built by His68 and Glu69. Substrate is bound at residue Glu154. NAD(+) contacts are provided by residues Asp202, Lys207, 275 to 277 (VGM), and 299 to 301 (CFR). Residues Arg301 and Tyr302 each contribute to the substrate site.

This sequence belongs to the zinc-containing alcohol dehydrogenase family. Homotetramer. Zn(2+) is required as a cofactor.

The enzyme catalyses keto-D-fructose + NADH + H(+) = D-sorbitol + NAD(+). The catalysed reaction is xylitol + NAD(+) = D-xylulose + NADH + H(+). Polyol dehydrogenase that catalyzes the reversible NAD(+)-dependent oxidation of various sugar alcohols. Is active with D-sorbitol (D-glucitol) and xylitol as substrates, leading to the C2-oxidized product D-fructose and D-xylulose, respectively. This Saccharomyces cerevisiae (strain ATCC 204508 / S288c) (Baker's yeast) protein is Sorbitol dehydrogenase 2 (SOR2).